We begin with the raw amino-acid sequence, 277 residues long: Large ribosomal subunit protein uL2 (277 aa).

The interval 222 to 277 (GVAMNPVDHPHGGGEGRTSGGRHPVSPWGKPTKGKRTRSNKATDKFIMRTRHQRKK) is disordered.

This sequence belongs to the universal ribosomal protein uL2 family. In terms of assembly, part of the 50S ribosomal subunit. Forms a bridge to the 30S subunit in the 70S ribosome.

Its function is as follows. One of the primary rRNA binding proteins. Required for association of the 30S and 50S subunits to form the 70S ribosome, for tRNA binding and peptide bond formation. It has been suggested to have peptidyltransferase activity; this is somewhat controversial. Makes several contacts with the 16S rRNA in the 70S ribosome. The protein is Large ribosomal subunit protein uL2 of Bartonella henselae (strain ATCC 49882 / DSM 28221 / CCUG 30454 / Houston 1) (Rochalimaea henselae).